The following is a 391-amino-acid chain: Elongation factor Tu (391 aa).

In terms of domain architecture, tr-type G spans K10–E201. The G1 stretch occupies residues G19 to T26. GTP is bound at residue G19–T26. T26 provides a ligand contact to Mg(2+). A G2 region spans residues G55–S59. The G3 stretch occupies residues D76 to G79. GTP is bound by residues D76 to H80 and N131 to D134. Positions N131–D134 are G4. Residues S169–L171 form a G5 region.

It belongs to the TRAFAC class translation factor GTPase superfamily. Classic translation factor GTPase family. EF-Tu/EF-1A subfamily. In terms of assembly, monomer.

The protein resides in the cytoplasm. The enzyme catalyses GTP + H2O = GDP + phosphate + H(+). Functionally, GTP hydrolase that promotes the GTP-dependent binding of aminoacyl-tRNA to the A-site of ribosomes during protein biosynthesis. This Bartonella henselae (strain ATCC 49882 / DSM 28221 / CCUG 30454 / Houston 1) (Rochalimaea henselae) protein is Elongation factor Tu.